The sequence spans 229 residues: MAGKNYRAAAAQVDRNMEYDLVDAVAKVKEITNVKFDATVDVAVKLGVDPRHADQVVRGTVMLPHGTGKTVSVLVVCKEAKAAEATEAGADLVGFEEYIEKIQNGWTGVDVIIATPDVMGQLGKVAKILGPRGLMPNPKSGTVTMDVAKAVKEVKAGKIEFRVDKAGNVHAPVGKASFPADQLVTNITSFLKEVMRLKPSAAKGQYVQGIAVSSTMSPGVRIKREKFVA.

It belongs to the universal ribosomal protein uL1 family. Part of the 50S ribosomal subunit.

In terms of biological role, binds directly to 23S rRNA. The L1 stalk is quite mobile in the ribosome, and is involved in E site tRNA release. Functionally, protein L1 is also a translational repressor protein, it controls the translation of the L11 operon by binding to its mRNA. The polypeptide is Large ribosomal subunit protein uL1 (Chlorobium luteolum (strain DSM 273 / BCRC 81028 / 2530) (Pelodictyon luteolum)).